Reading from the N-terminus, the 481-residue chain is Phosphoglycerate kinase 1, chloroplastic (481 aa).

The transit peptide at 1-75 directs the protein to the chloroplast; the sequence is MASAAASSAF…VRGKGSRGVV (75 aa). S81 bears the Phosphoserine mark. Positions 99, 100, 102, 116, 138, 139, 141, 142, 197, 229, and 230 each coordinate (2R)-3-phosphoglycerate. Position 275 (G275) interacts with ADP. Residue G275 coordinates CDP. Positions 277 and 281 each coordinate AMP. K281 is a binding site for ATP. G299 contacts ADP. CDP is bound at residue G299. Residues G300 and G372 each contribute to the AMP site. The ATP site is built by G300 and G372. G397 and F402 together coordinate CDP. An ADP-binding site is contributed by F402. Residue E403 coordinates AMP. ATP-binding residues include E403, D434, and S435. D434 is a binding site for Mg(2+).

The protein belongs to the phosphoglycerate kinase family. Monomer. Binds to FTSZ2-1 and FTSZ2-2. Requires Mg(2+) as cofactor.

Its subcellular location is the plastid. The protein resides in the chloroplast. It catalyses the reaction (2R)-3-phosphoglycerate + ATP = (2R)-3-phospho-glyceroyl phosphate + ADP. The protein operates within carbohydrate biosynthesis; Calvin cycle. Functionally, may trigger the phosphorylation of FTSZ2-1 and FTSZ2-2. The protein is Phosphoglycerate kinase 1, chloroplastic of Arabidopsis thaliana (Mouse-ear cress).